The primary structure comprises 277 residues: Bifunctional protein FolD (277 aa).

Residues 159–161 (GRS), Ser184, and Ile225 each bind NADP(+).

The protein belongs to the tetrahydrofolate dehydrogenase/cyclohydrolase family. In terms of assembly, homodimer.

The enzyme catalyses (6R)-5,10-methylene-5,6,7,8-tetrahydrofolate + NADP(+) = (6R)-5,10-methenyltetrahydrofolate + NADPH. It carries out the reaction (6R)-5,10-methenyltetrahydrofolate + H2O = (6R)-10-formyltetrahydrofolate + H(+). Its pathway is one-carbon metabolism; tetrahydrofolate interconversion. Functionally, catalyzes the oxidation of 5,10-methylenetetrahydrofolate to 5,10-methenyltetrahydrofolate and then the hydrolysis of 5,10-methenyltetrahydrofolate to 10-formyltetrahydrofolate. The protein is Bifunctional protein FolD of Acholeplasma laidlawii (strain PG-8A).